A 274-amino-acid polypeptide reads, in one-letter code: Orotidine 5'-phosphate decarboxylase (274 aa).

The Proton donor role is filled by lysine 96.

The protein belongs to the OMP decarboxylase family. Type 2 subfamily.

The enzyme catalyses orotidine 5'-phosphate + H(+) = UMP + CO2. Its pathway is pyrimidine metabolism; UMP biosynthesis via de novo pathway; UMP from orotate: step 2/2. This is Orotidine 5'-phosphate decarboxylase from Bacteroides fragilis (strain ATCC 25285 / DSM 2151 / CCUG 4856 / JCM 11019 / LMG 10263 / NCTC 9343 / Onslow / VPI 2553 / EN-2).